We begin with the raw amino-acid sequence, 202 residues long: Protein Mbar_A1807 (202 aa).

Residues 5-196 form the AMMECR1 domain; that stretch reads VEGRAAVKLA…EKEPCGEVLE (192 aa).

This chain is Protein Mbar_A1807, found in Methanosarcina barkeri (strain Fusaro / DSM 804).